Here is a 758-residue protein sequence, read N- to C-terminus: Dachshund homolog 1 (758 aa).

Disordered stretches follow at residues 1-105 (MAVP…SNCN) and 134-185 (INAS…TPQN). Positions 20 to 53 (ISTSASSSGTTTSTSSATSSPAPSIGPPASSGPT) are enriched in low complexity. Positions 73-102 (TGGGGGGGGSGGGGGSSGNGGGGGGGGGGS) are enriched in gly residues. Over residues 140–163 (SSSSSSSSSSSSSSSSSSSSSSSS) the composition is skewed to low complexity. The segment covering 174–185 (STPSPVENTPQN) has biased composition (polar residues). The tract at residues 189 to 275 (KMVDLRGAKV…LISRKDFETL (87 aa)) is DACHbox-N. Positions 189–384 (KMVDLRGAKV…VGSSDGSWDK (196 aa)) are interaction with SIX6 and HDAC3. Disordered stretches follow at residues 280–302 (TNAS…PENS), 358–414 (SNNQ…PLSH), 474–532 (SPPS…RIPV), and 544–564 (MGLS…GHDM). Composition is skewed to polar residues over residues 292 to 301 (RTQSVTSPEN), 358 to 380 (SNNQ…SSDG), and 387 to 399 (LPSS…QASI). The residue at position 491 (serine 491) is a Phosphoserine. Over residues 506-524 (SHPSSHRSSSVSSSPARTE) the composition is skewed to low complexity. Over residues 555-564 (KEGDLAGHDM) the composition is skewed to basic and acidic residues. The interval 616 to 696 (SSIETLLTNI…KAKRKLQEAL (81 aa)) is DACHbox-C. The interaction with SIN3A stretch occupies residues 627–706 (GLLKVAIDNA…EFETKRREQA (80 aa)). The stretch at 630 to 718 (KVAIDNARAQ…TLKQAASTDS (89 aa)) forms a coiled coil.

This sequence belongs to the DACH/dachshund family. Interacts with SIX1, SIX6 and EYA3. Interacts with NCOR1 and HDAC3 through its N-terminus. Interacts with SIN3A through its C-terminus. Interacts with SMAD3 and SMAD4. In terms of tissue distribution, widely expressed. Isoform 2 is found in brain, heart, kidney, liver, leukocytes and spleen. Isoform 3 is found in liver and heart. Isoform 4 is found in spleen.

The protein resides in the nucleus. Functionally, transcription factor that is involved in regulation of organogenesis. Seems to be a regulator of SIX1, SIX6 and probably SIX5. Corepression of precursor cell proliferation in myoblasts by SIX1 is switched to coactivation through recruitment of EYA3 to the SIX1-DACH1 complex. Transcriptional activation also seems to involve association of CREBBP. Seems to act as a corepressor of SIX6 in regulating proliferation by directly repressing cyclin-dependent kinase inhibitors, including the p27Kip1 promoter. Inhibits TGF-beta signaling through interaction with SMAD4 and NCOR1. Binds to chromatin DNA via its DACHbox-N domain. This is Dachshund homolog 1 (DACH1) from Homo sapiens (Human).